We begin with the raw amino-acid sequence, 132 residues long: NADH-quinone oxidoreductase subunit I 1 (132 aa).

4Fe-4S ferredoxin-type domains are found at residues 42-71 (LKVS…VEAG) and 81-110 (ERYE…MTGQ). Positions 51, 54, 57, 61, 90, 93, 96, and 100 each coordinate [4Fe-4S] cluster.

This sequence belongs to the complex I 23 kDa subunit family. NDH-1 is composed of 14 different subunits. Subunits NuoA, H, J, K, L, M, N constitute the membrane sector of the complex. The cofactor is [4Fe-4S] cluster.

The protein resides in the cell inner membrane. The catalysed reaction is a quinone + NADH + 5 H(+)(in) = a quinol + NAD(+) + 4 H(+)(out). In terms of biological role, NDH-1 shuttles electrons from NADH, via FMN and iron-sulfur (Fe-S) centers, to quinones in the respiratory chain. The immediate electron acceptor for the enzyme in this species is believed to be ubiquinone. Couples the redox reaction to proton translocation (for every two electrons transferred, four hydrogen ions are translocated across the cytoplasmic membrane), and thus conserves the redox energy in a proton gradient. The sequence is that of NADH-quinone oxidoreductase subunit I 1 from Geobacter sulfurreducens (strain ATCC 51573 / DSM 12127 / PCA).